Here is a 298-residue protein sequence, read N- to C-terminus: Cyclin-dependent kinase 2 (298 aa).

At Met1 the chain carries N-acetylmethionine. The Protein kinase domain occupies 4–286 (FQKVEKIGEG…AKAALAHPFF (283 aa)). The residue at position 6 (Lys6) is an N6-acetyllysine. Residue 10-18 (IGEGTYGVV) coordinates ATP. At Thr14 the chain carries Phosphothreonine. Tyr15 is subject to Phosphotyrosine; by WEE1. Residue Tyr19 is modified to Phosphotyrosine. Residues Lys33, 81–83 (EFL), and Asp86 contribute to the ATP site. The active-site Proton acceptor is Asp127. ATP contacts are provided by residues 129–132 (KPQN) and Asp145. Mg(2+) is bound by residues Asn132 and Asp145. Thr160 is modified (phosphothreonine; by CAK and CCRK).

The protein belongs to the protein kinase superfamily. CMGC Ser/Thr protein kinase family. CDC2/CDKX subfamily. As to quaternary structure, found in a complex with CABLES1, CCNA1 and CCNE1. Interacts with CABLES1. Interacts with UHRF2. Part of a complex consisting of UHRF2, CDK2 and CCNE1. Interacts with the Speedy/Ringo proteins SPDYA and SPDYC. Interaction with SPDYA promotes kinase activation via a conformation change that alleviates obstruction of the substrate-binding cleft by the T-loop. Found in a complex with both SPDYA and CDKN1B/KIP1. Binds to RB1 and CDK7. Binding to CDKN1A (p21) leads to CDK2/cyclin E inactivation at the G1-S phase DNA damage checkpoint, thereby arresting cells at the G1-S transition during DNA repair. Associated with PTPN6 and beta-catenin/CTNNB1. Interacts with CACUL1. May interact with CEP63. Interacts with ANKRD17. Interacts with CEBPA (when phosphorylated). Forms a ternary complex with CCNA2 and CDKN1B; CDKN1B inhibits the kinase activity of CDK2 through conformational rearrangements. Interacts with cyclins A, B1, B3, D, or E. Interacts with CDK2AP2. It depends on Mg(2+) as a cofactor. Phosphorylated at Thr-160 by CDK7 in a CAK complex. Phosphorylation at Thr-160 promotes kinase activity, whereas phosphorylation at Tyr-15 by WEE1 reduces slightly kinase activity. Phosphorylated on Thr-14 and Tyr-15 during S and G2 phases before being dephosphorylated by CDC25A. In terms of processing, nitrosylated after treatment with nitric oxide (DETA-NO).

It localises to the cytoplasm. It is found in the cytoskeleton. The protein localises to the microtubule organizing center. Its subcellular location is the centrosome. The protein resides in the nucleus. It localises to the cajal body. It is found in the endosome. It catalyses the reaction L-seryl-[protein] + ATP = O-phospho-L-seryl-[protein] + ADP + H(+). The catalysed reaction is L-threonyl-[protein] + ATP = O-phospho-L-threonyl-[protein] + ADP + H(+). With respect to regulation, phosphorylation at Thr-14 or Tyr-15 inactivates the enzyme, while phosphorylation at Thr-160 activates it. Stimulated by MYC. Inactivated by CDKN1A (p21). Functionally, serine/threonine-protein kinase involved in the control of the cell cycle; essential for meiosis, but dispensable for mitosis. Phosphorylates CABLES1, CTNNB1, CDK2AP2, ERCC6, NBN, USP37, p53/TP53, NPM1, CDK7, RB1, BRCA2, MYC, NPAT, EZH2. Triggers duplication of centrosomes and DNA. Acts at the G1-S transition to promote the E2F transcriptional program and the initiation of DNA synthesis, and modulates G2 progression; controls the timing of entry into mitosis/meiosis by controlling the subsequent activation of cyclin B/CDK1 by phosphorylation, and coordinates the activation of cyclin B/CDK1 at the centrosome and in the nucleus. Crucial role in orchestrating a fine balance between cellular proliferation, cell death, and DNA repair in embryonic stem cells (ESCs). Activity of CDK2 is maximal during S phase and G2; activated by interaction with cyclin E during the early stages of DNA synthesis to permit G1-S transition, and subsequently activated by cyclin A2 (cyclin A1 in germ cells) during the late stages of DNA replication to drive the transition from S phase to mitosis, the G2 phase. EZH2 phosphorylation promotes H3K27me3 maintenance and epigenetic gene silencing. Cyclin E/CDK2 prevents oxidative stress-mediated Ras-induced senescence by phosphorylating MYC. Involved in G1-S phase DNA damage checkpoint that prevents cells with damaged DNA from initiating mitosis; regulates homologous recombination-dependent repair by phosphorylating BRCA2, this phosphorylation is low in S phase when recombination is active, but increases as cells progress towards mitosis. In response to DNA damage, double-strand break repair by homologous recombination a reduction of CDK2-mediated BRCA2 phosphorylation. Involved in regulation of telomere repair by mediating phosphorylation of NBN. Phosphorylation of RB1 disturbs its interaction with E2F1. NPM1 phosphorylation by cyclin E/CDK2 promotes its dissociation from unduplicated centrosomes, thus initiating centrosome duplication. Cyclin E/CDK2-mediated phosphorylation of NPAT at G1-S transition and until prophase stimulates the NPAT-mediated activation of histone gene transcription during S phase. Required for vitamin D-mediated growth inhibition by being itself inactivated. Involved in the nitric oxide- (NO) mediated signaling in a nitrosylation/activation-dependent manner. USP37 is activated by phosphorylation and thus triggers G1-S transition. CTNNB1 phosphorylation regulates insulin internalization. Phosphorylates FOXP3 and negatively regulates its transcriptional activity and protein stability. Phosphorylates ERCC6 which is essential for its chromatin remodeling activity at DNA double-strand breaks. Acts as a regulator of the phosphatidylinositol 3-kinase/protein kinase B signal transduction by mediating phosphorylation of the C-terminus of protein kinase B (PKB/AKT1 and PKB/AKT2), promoting its activation. The chain is Cyclin-dependent kinase 2 (CDK2) from Bos taurus (Bovine).